A 183-amino-acid chain; its full sequence is Gamma-crystallin N-B (183 aa).

Beta/gamma crystallin 'Greek key' domains lie at 6–46, 47–89, 95–136, and 138–180; these read GKIC…RVES, GAWI…RPIR, YRME…RVFG, and GAWV…RRIV.

Belongs to the beta/gamma-crystallin family. In terms of assembly, monomer.

In terms of biological role, crystallins are the dominant structural components of the vertebrate eye lens. The protein is Gamma-crystallin N-B (crygnb) of Danio rerio (Zebrafish).